Reading from the N-terminus, the 3434-residue chain is MSKKPGGPGKPRVVNMLKRGIPRVFPLVGVKRVVMNLLDGRGPIRFVLALLAFFRFTALAPTKALMRRWKSVNKTTAMKHLTSFKKELGTLIDVVNKRGKKQKKRGGSETSVLMLIFMLIGFAAALKLSTFQGKIMMTVNATDIADVIAIPTPKGPNQCWIRAIDIGFMCDDTITYECPKLESGNDPEDIDCWCDKQAVYVNYGRCTRARHSKRSRRSITVQTHGESTLVNKKDAWLDSTKATRYLTKTENWIIRNPGYALVAVVLGWMLGSNTGQKVIFTVLLLLVAPAYSFNCLGMSSRDFIEGASGATWVDLVLEGDSCITIMAADKPTLDIRMMNIEATNLALVRNYCYAATVSDVSTVSNCPTTGESHNTKRADHNYLCKRGVTDRGWGNGCGLFGKGSIDTCAKFTCSNSAAGRLILPEDIKYEVGVFVHGSTDSTSHGNYSTQIGANQAVRFTISPNAPAITAKMGDYGEVTVECEPRSGLNTEAYYVMTIGTKHFLVHREWFNDLLLPWTSPASTEWRNREILVEFEEPHATKQSVVALGSQEGALHQALAGAIPVEFSSSTLKLTSGHLKCRVKMEKLKLKGTTYGMCTEKFTFSKNPADTGHGTVVLELQYTGSDGPCKIPISSVASLNDMTPVGRMVTANPYVASSTANAKVLVEIEPPFGDSYIVVGRGDKQINHHWHKEGSSIGKAFSTTLKGAQRLAALGDTAWDFGSVGGVFNSIGKAVHQVFGGAFRTLFGGMSWISPGLLGALLLWMGVNARDKSIALAFLATGGVLLFLATNVHADTGCAIDITRRELKCGSGIFIHNDVEAWIDRYKYLPETPKQLAKVVENAHKSGICGIRSVNRFEHQMWESVRDELNALLKENAIDLSVVVEKQKGMYRAAPNRLRLTVEELDIGWKAWGKSLLFAAELANSTFVVDGPETAECPNSKRAWNSFEIEDFGFGITSTRGWLKLREENTSECDSTIIGTAVKGNHAVHSDLSYWIESGLNGTWKLERAIFGEVKSCTWPETHTLWGDAVEETELIIPVTLAGPRSKHNRREGYKVQVQGPWDEEDIKLDFDYCPGTTVTVSEHCGKRGPSVRTTTDSGKLVTDWCCRSCTLPPLRFTTASGCWYGMEIRPMKHDESTLVKSRVQAFNGDMIDPFQLGLLVMFLATQEVLRKRWTARLTLPAAVGALLVLLLGGITYTDLVRYLILVGSAFAESNNGGDVIHLALIAVFKVQPAFLVASLTRSRWTNQENLVLVLGAAFFQMAASDLELTIPGLLNSAATAWMVLRAMAFPSTSAIAMPMLAMLAPGMRMLHLDTYRIVLLLIGICSLLNERRRSVEKKKGAVLIGLALTSTGYFSPTIMAAGLMICNPNKKRGWPATEVLTAVGLMFAIVGGLAELDIDSMSVPFTIAGLMLVSYVISGKATDMWLERAADVSWEAGAAITGTSERLDVQLDDDGDFHLLNDPGVPWKIWVLRMTCLSVAAITPRAILPSAFGYWLTLKYTKRGGVFWDTPSPKVYPKGDTTPGVYRIMARGILGRYQAGVGVMHEGVFHTLWHTTRGAAIMSGEGRLTPYWGNVKEDRVTYGGPWKLDQKWNGVDDVQMIVVEPGKPAINVQTKPGIFKTAHGEIGAVSLDYPIGTSGSPIVNSNGEIIGLYGNGVILGNGAYVSAIVQGERVEEPVPEAYNPEMLKKRQLTVLDLHPGAGKTRRILPQIIKDAIQKRLRTAVLAPTRVVAAEMAEALRGLPVRYLTPAVQREHSGNEIVDVMCHATLTHRLMSPLRVPNYNLFVMDEAHFTDPASIAARGYIATRVEAGEAAAIFMTATPPGTSDPFPDTNSPVHDVSSEIPDRAWSSGFEWITDYAGKTVWFVASVKMSNEIAQCLQRAGKRVIQLNRKSYDTEYPKCKNGDWDFVITTDISEMGANFGASRVIDCRKSVKPTILDEGEGRVILSVPSAITSASAAQRRGRVGRNPSQIGDEYHYGGGTSEDDTMLAHWTEAKILLDNIHLPNGLVAQLYGPERDKTYTMDGEYRLRGEERKTFLELIKTADLPVWLAYKVASNGIQYNDRKWCFDGPRSNIILEDNNEVEIITRIGERKVLKPRWLDARVYSDHQSLKWFKDFAAGKRSAIGFFEVLGRMPEHFAGKTREALDTMYLVATSEKGGKAHRMALEELPDALETITLIAALGVMTAGFFLLMMQRKGIGKLGLGALVLVVATFFLWMSDVSGTKIAGVLLLALLMMVVLIPEPEKQRSQTDNQLAVFLICVLLVVGLVAANEYGMLERTKTDIRNLFGKSLIEENEVHIPPFDFFTLDLKPATAWALYGGSTVVLTPLIKHLVTSQYVTTSLASINAQAGSLFTLPKGIPFTDFDLSVALVFLGCWGQVTLTTLIMATILVTLHYGYLLPGWQAEALRAAQKRTAAGIMKNAVVDGIVATDVPELERTTPQMQKRLGQILLVLASVAAVCVNPRITTIREAGILCTAAALTLWDNNASAAWNSTTATGLCHVMRGSWIAGASIAWTLIKNAEKPAFKRGRAGGRTLGEQWKEKLNAMGKEEFFSYRKEAILEVDRTEARRARREGNKVGGHPVSRGTAKLRWLVERRFVQPIGKVVDLGCGRGGWSYYAATMKNVQEVRGYTKGGPGHEEPMLMQSYGWNIVTMKSGVDVFYKPSEISDTLLCDIGESSPSAEIEEQRTLRILEMVSDWLSRGPKEFCIKILCPYMPKVIEKLESLQRRFGGGLVRVPLSRNSNHEMYWVSGASGNIVHAVNMTSQVLIGRMDKKIWKGPKYEEDVNLGSGTRAVGKGVQHTDYKRIKSRIEKLKEEYAATWHTDDNHPYRTWTYHGSYEVKPSGSASTLVNGVVRLLSKPWDAITGVTTMAMTDTTPFGQQRVFKEKVDTKAPEPPQGVKTVMDETTNWLWAYLARNKKARLCTREEFVKKVNSHAALGAMFEEQNQWKNAREAVEDPKFWEMVDEERECHLRGECRTCIYNMMGKREKKPGEFGKAKGSRAIWFMWLGARFLEFEALGFLNEDHWMSRENSGGGVEGAGIQKLGYILRDVAQKPGGKIYADDTAGWDTRITQADLENEAKVLELMEGEQRTLARAIIELTYRHKVVKVMRPAAGGKTVMDVISREDQRGSGQVVTYALNTFTNIAVQLVRLMEAEAVIGPDDIESIERKKKFAVRTWLFENAEERVQRMAVSGDDCVVKPLDDRFSTALHFLNAMSKVRKDIQEWKPSQGWYDWQQVPFCSNHFQEVIMKDGRTLVVPCRGQDELIGRARISPGSGWNVRDTACLAKAYAQMWLVLYFHRRDLRLMANAICSSVPVDWVPTGRTTWSIHGKGEWMTTEDMLSVWNRVWILENEWMEDKTTVSDWTEVPYVGKREDIWCGSLIGTRTRATWAENIYAAINQVRSVIGKEKYVDYVQSLRRYEETHVSEDRVL.

The segment at 2–15 (SKKPGGPGKPRVVN) is interaction with host EXOC1. The Cytoplasmic portion of the chain corresponds to 2–110 (SKKPGGPGKP…KQKKRGGSET (109 aa)). A hydrophobic; homodimerization of capsid protein C region spans residues 37–72 (LLDGRGPIRFVLALLAFFRFTALAPTKALMRRWKSV). The propeptide at 106–125 (GGSETSVLMLIFMLIGFAAA) is ER anchor for the capsid protein C, removed in mature form by serine protease NS3. The chain crosses the membrane as a helical span at residues 111-131 (SVLMLIFMLIGFAAALKLSTF). Over 132-251 (QGKIMMTVNA…ATRYLTKTEN (120 aa)) the chain is Extracellular. Residue Asn-140 is glycosylated (N-linked (GlcNAc...) asparagine; by host). Residues 252 to 272 (WIIRNPGYALVAVVLGWMLGS) traverse the membrane as a helical segment. Over 273–277 (NTGQK) the chain is Cytoplasmic. Residues 278 to 292 (VIFTVLLLLVAPAYS) traverse the membrane as a helical segment. Residues 293–745 (FNCLGMSSRD…QVFGGAFRTL (453 aa)) are Extracellular-facing. Disulfide bonds link Cys-295–Cys-322, Cys-352–Cys-408, Cys-352–Cys-413, Cys-366–Cys-397, Cys-384–Cys-408, and Cys-384–Cys-413. The tract at residues 390–403 (DRGWGNGCGLFGKG) is fusion peptide. N-linked (GlcNAc...) asparagine; by host glycosylation is present at Asn-446. 2 disulfide bridges follow: Cys-482–Cys-580 and Cys-597–Cys-628. The chain crosses the membrane as a helical span at residues 746–766 (FGGMSWISPGLLGALLLWMGV). Residues 767-772 (NARDKS) lie on the Cytoplasmic side of the membrane. A helical transmembrane segment spans residues 773–793 (IALAFLATGGVLLFLATNVHA). The Extracellular portion of the chain corresponds to 794–1218 (DTGCAIDITR…AFAESNNGGD (425 aa)). 2 disulfide bridges follow: Cys-797–Cys-808 and Cys-848–Cys-936. 2 N-linked (GlcNAc...) asparagine; by host glycosylation sites follow: Asn-923 and Asn-968. 4 disulfides stabilise this stretch: Cys-972–Cys-1016, Cys-1073–Cys-1122, Cys-1084–Cys-1105, and Cys-1106–Cys-1109. Asn-1000 is a glycosylation site (N-linked (GlcNAc...) (high mannose) asparagine; by host). Residues 1219–1239 (VIHLALIAVFKVQPAFLVASL) traverse the membrane as a helical segment. At 1240 to 1249 (TRSRWTNQEN) the chain is on the cytoplasmic side. A helical membrane pass occupies residues 1250–1270 (LVLVLGAAFFQMAASDLELTI). Over 1271 to 1286 (PGLLNSAATAWMVLRA) the chain is Lumenal. A helical transmembrane segment spans residues 1287 to 1307 (MAFPSTSAIAMPMLAMLAPGM). Position 1308 (Arg-1308) is a topological domain, cytoplasmic. Residues 1309–1329 (MLHLDTYRIVLLLIGICSLLN) traverse the membrane as a helical segment. The Lumenal portion of the chain corresponds to 1330–1340 (ERRRSVEKKKG). The helical transmembrane segment at 1341–1361 (AVLIGLALTSTGYFSPTIMAA) threads the bilayer. Over 1362-1373 (GLMICNPNKKRG) the chain is Cytoplasmic. A helical membrane pass occupies residues 1374–1394 (WPATEVLTAVGLMFAIVGGLA). Over 1395-1397 (ELD) the chain is Lumenal. The helical transmembrane segment at 1398–1418 (IDSMSVPFTIAGLMLVSYVIS) threads the bilayer. Residues 1419–1475 (GKATDMWLERAADVSWEAGAAITGTSERLDVQLDDDGDFHLLNDPGVPWKIWVLRMT) lie on the Cytoplasmic side of the membrane. Residues 1426–1465 (LERAADVSWEAGAAITGTSERLDVQLDDDGDFHLLNDPGV) are interacts with and activates NS3 protease. The helical intramembrane region spans 1476 to 1496 (CLSVAAITPRAILPSAFGYWL). At 1497–2172 (TLKYTKRGGV…RMALEELPDA (676 aa)) the chain is on the cytoplasmic side. The Peptidase S7 domain occupies 1504–1681 (GGVFWDTPSP…ERVEEPVPEA (178 aa)). Active-site charge relay system; for serine protease NS3 activity residues include His-1554, Asp-1578, and Ser-1638. Residues 1684 to 1840 (PEMLKKRQLT…DTNSPVHDVS (157 aa)) form the Helicase ATP-binding domain. An important for RNA-binding region spans residues 1688-1691 (KKRQ). ATP is bound at residue 1697 to 1704 (LHPGAGKT). The short motif at 1788–1791 (DEAH) is the DEAH box element. The 166-residue stretch at 1851–2016 (GFEWITDYAG…GLVAQLYGPE (166 aa)) folds into the Helicase C-terminal domain. Lys-1892 is subject to N6-acetyllysine; by host. The tract at residues 1958-1979 (AAQRRGRVGRNPSQIGDEYHYG) is disordered. The tract at residues 2167–2171 (EELPD) is regulates the ATPase activity of NS3 helicase. The helical transmembrane segment at 2173–2193 (LETITLIAALGVMTAGFFLLM) threads the bilayer. The Lumenal portion of the chain corresponds to 2194–2197 (MQRK). An intramembrane region (helical) is located at residues 2198 to 2218 (GIGKLGLGALVLVVATFFLWM). Residues 2219–2220 (SD) lie on the Lumenal side of the membrane. Residues 2221–2241 (VSGTKIAGVLLLALLMMVVLI) traverse the membrane as a helical segment. Residues 2242–2256 (PEPEKQRSQTDNQLA) are Cytoplasmic-facing. The helical transmembrane segment at 2257–2271 (VFLICVLLVVGLVAA) threads the bilayer. The Lumenal segment spans residues 2272–2309 (NEYGMLERTKTDIRNLFGKSLIEENEVHIPPFDFFTLD). An intramembrane region (helical) is located at residues 2310-2330 (LKPATAWALYGGSTVVLTPLI). The Lumenal portion of the chain corresponds to 2331–2366 (KHLVTSQYVTTSLASINAQAGSLFTLPKGIPFTDFD). Residues 2367 to 2394 (LSVALVFLGCWGQVTLTTLIMATILVTL) traverse the membrane as a helical segment. The Cytoplasmic segment spans residues 2395–2446 (HYGYLLPGWQAEALRAAQKRTAAGIMKNAVVDGIVATDVPELERTTPQMQKR). A helical membrane pass occupies residues 2447–2467 (LGQILLVLASVAAVCVNPRIT). Residues 2468 to 2498 (TIREAGILCTAAALTLWDNNASAAWNSTTAT) are Lumenal-facing. Residues 2499–2519 (GLCHVMRGSWIAGASIAWTLI) form a helical membrane-spanning segment. At 2520–3434 (KNAEKPAFKR…ETHVSEDRVL (915 aa)) the chain is on the cytoplasmic side. The region spanning 2530–2795 (GRAGGRTLGE…DVNLGSGTRA (266 aa)) is the mRNA cap 0-1 NS5-type MT domain. Ser-2585 is an S-adenosyl-L-methionine binding site. Ser-2585 is modified (phosphoserine). Lys-2590 functions as the For 2'-O-MTase activity in the catalytic mechanism. Residues Gly-2615, Trp-2616, Thr-2633, Lys-2634, Asp-2660, and Val-2661 each coordinate S-adenosyl-L-methionine. Asp-2675 functions as the For 2'-O-MTase activity in the catalytic mechanism. Ile-2676 contacts S-adenosyl-L-methionine. Catalysis depends on for 2'-O-MTase activity residues Lys-2711 and Glu-2747. Tyr-2749 is a binding site for S-adenosyl-L-methionine. Residues Glu-2969, His-2973, Cys-2978, and Cys-2981 each contribute to the Zn(2+) site. Residues 3059–3211 (GKIYADDTAG…KPLDDRFSTA (153 aa)) enclose the RdRp catalytic domain. Residues His-3246, Cys-3262, and Cys-3381 each contribute to the Zn(2+) site.

In the N-terminal section; belongs to the class I-like SAM-binding methyltransferase superfamily. mRNA cap 0-1 NS5-type methyltransferase family. Homodimer. Interacts (via N-terminus) with host EXOC1 (via C-terminus); this interaction results in EXOC1 degradation through the proteasome degradation pathway. As to quaternary structure, forms heterodimers with envelope protein E in the endoplasmic reticulum and Golgi. In terms of assembly, homodimer; in the endoplasmic reticulum and Golgi. Interacts with protein prM. Interacts with non-structural protein 1. Homodimer; Homohexamer when secreted. Interacts with envelope protein E. NS1 interacts with NS4B. Interacts with host complement protein CFH; this interaction leads to the degradation of C3. As to quaternary structure, interacts (via N-terminus) with serine protease NS3. In terms of assembly, forms a heterodimer with serine protease NS3. May form homooligomers. Forms a heterodimer with NS2B. Interacts with non-structural protein 2A (via N-terminus). Interacts with NS4B. Interacts with unphosphorylated RNA-directed RNA polymerase NS5; this interaction stimulates RNA-directed RNA polymerase NS5 guanylyltransferase activity. As to quaternary structure, interacts with serine protease NS3. In terms of assembly, homodimer. Interacts with host STAT2; this interaction inhibits the phosphorylation of the latter, and, when all viral proteins are present (polyprotein), targets STAT2 for degradation. Interacts with serine protease NS3. Post-translationally, specific enzymatic cleavages in vivo yield mature proteins. Cleavages in the lumen of endoplasmic reticulum are performed by host signal peptidase, whereas cleavages in the cytoplasmic side are performed by serine protease NS3. Signal cleavage at the 2K-4B site requires a prior NS3 protease-mediated cleavage at the 4A-2K site. In terms of processing, cleaved in post-Golgi vesicles by a host furin, releasing the mature small envelope protein M, and peptide pr. This cleavage is incomplete as up to 30% of viral particles still carry uncleaved prM. N-glycosylated. Post-translationally, N-glycosylated. The excreted form is glycosylated and this is required for efficient secretion of the protein from infected cells. In terms of processing, acetylated by host KAT5. Acetylation modulates NS3 RNA-binding and unwinding activities and plays an important positive role for viral replication. Phosphorylated on serines residues. This phosphorylation may trigger NS5 nuclear localization.

Its subcellular location is the virion. It is found in the host nucleus. The protein resides in the host cytoplasm. It localises to the host perinuclear region. The protein localises to the secreted. Its subcellular location is the virion membrane. It is found in the host endoplasmic reticulum membrane. The enzyme catalyses Selective hydrolysis of -Xaa-Xaa-|-Yaa- bonds in which each of the Xaa can be either Arg or Lys and Yaa can be either Ser or Ala.. It carries out the reaction RNA(n) + a ribonucleoside 5'-triphosphate = RNA(n+1) + diphosphate. It catalyses the reaction a ribonucleoside 5'-triphosphate + H2O = a ribonucleoside 5'-diphosphate + phosphate + H(+). The catalysed reaction is ATP + H2O = ADP + phosphate + H(+). The enzyme catalyses a 5'-end (5'-triphosphoguanosine)-ribonucleoside in mRNA + S-adenosyl-L-methionine = a 5'-end (N(7)-methyl 5'-triphosphoguanosine)-ribonucleoside in mRNA + S-adenosyl-L-homocysteine. It carries out the reaction a 5'-end (N(7)-methyl 5'-triphosphoguanosine)-ribonucleoside in mRNA + S-adenosyl-L-methionine = a 5'-end (N(7)-methyl 5'-triphosphoguanosine)-(2'-O-methyl-ribonucleoside) in mRNA + S-adenosyl-L-homocysteine + H(+). Its function is as follows. Plays a role in virus budding by binding to the cell membrane and gathering the viral RNA into a nucleocapsid that forms the core of a mature virus particle. During virus entry, may induce genome penetration into the host cytoplasm after hemifusion induced by the surface proteins. Can migrate to the cell nucleus where it modulates host functions. Overcomes the anti-viral effects of host EXOC1 by sequestering and degrading the latter through the proteasome degradation pathway. Inhibits RNA silencing by interfering with host Dicer. In terms of biological role, prevents premature fusion activity of envelope proteins in trans-Golgi by binding to envelope protein E at pH6.0. After virion release in extracellular space, gets dissociated from E dimers. Functionally, acts as a chaperone for envelope protein E during intracellular virion assembly by masking and inactivating envelope protein E fusion peptide. prM is the only viral peptide matured by host furin in the trans-Golgi network probably to avoid catastrophic activation of the viral fusion activity in acidic Golgi compartment prior to virion release. prM-E cleavage is inefficient, and many virions are only partially matured. These uncleaved prM would play a role in immune evasion. Its function is as follows. May play a role in virus budding. Exerts cytotoxic effects by activating a mitochondrial apoptotic pathway through M ectodomain. May display a viroporin activity. Binds to host cell surface receptor and mediates fusion between viral and cellular membranes. Envelope protein is synthesized in the endoplasmic reticulum in the form of heterodimer with protein prM. They play a role in virion budding in the ER, and the newly formed immature particle is covered with 60 spikes composed of heterodimer between precursor prM and envelope protein E. The virion is transported to the Golgi apparatus where the low pH causes dissociation of PrM-E heterodimers and formation of E homodimers. prM-E cleavage is inefficient, and many virions are only partially matured. These uncleaved prM would play a role in immune evasion. In terms of biological role, involved in immune evasion, pathogenesis and viral replication. Once cleaved off the polyprotein, is targeted to three destinations: the viral replication cycle, the plasma membrane and the extracellular compartment. Essential for viral replication. Required for formation of the replication complex and recruitment of other non-structural proteins to the ER-derived membrane structures. Excreted as a hexameric lipoparticle that plays a role against host immune response. Antagonizing the complement function. Binds to the host macrophages and dendritic cells. Inhibits signal transduction originating from Toll-like receptor 3 (TLR3). Functionally, component of the viral RNA replication complex that functions in virion assembly and antagonizes the host alpha/beta interferon antiviral response. Its function is as follows. Required cofactor for the serine protease function of NS3. May have membrane-destabilizing activity and form viroporins. Displays three enzymatic activities: serine protease, NTPase and RNA helicase. NS3 serine protease, in association with NS2B, performs its autocleavage and cleaves the polyprotein at dibasic sites in the cytoplasm: C-prM, NS2A-NS2B, NS2B-NS3, NS3-NS4A, NS4A-2K and NS4B-NS5. NS3 RNA helicase binds RNA and unwinds dsRNA in the 3' to 5' direction. In terms of biological role, regulates the ATPase activity of the NS3 helicase activity. NS4A allows NS3 helicase to conserve energy during unwinding. Functionally, functions as a signal peptide for NS4B and is required for the interferon antagonism activity of the latter. Its function is as follows. Induces the formation of ER-derived membrane vesicles where the viral replication takes place. Inhibits interferon (IFN)-induced host STAT1 phosphorylation and nuclear translocation, thereby preventing the establishment of cellular antiviral state by blocking the IFN-alpha/beta pathway. Inhibits STAT2 translocation in the nucleus after IFN-alpha treatment. Replicates the viral (+) and (-) RNA genome, and performs the capping of genomes in the cytoplasm. NS5 methylates viral RNA cap at guanine N-7 and ribose 2'-O positions. Besides its role in RNA genome replication, also prevents the establishment of cellular antiviral state by blocking the interferon-alpha/beta (IFN-alpha/beta) signaling pathway. Inhibits host TYK2 and STAT2 phosphorylation, thereby preventing activation of JAK-STAT signaling pathway. This Culex annulirostris (Common banded mosquito) protein is Genome polyprotein.